Here is a 567-residue protein sequence, read N- to C-terminus: Potassium-transporting ATPase potassium-binding subunit (567 aa).

Transmembrane regions (helical) follow at residues 5–25 (GWLQ…PLGG), 64–84 (TTYS…LYFL), 136–156 (GFTV…IALI), 179–199 (LYVL…LGVP), 254–274 (ISNL…TNVF), 285–305 (WAIL…TYWA), 328–350 (VRFG…CGAV), 375–395 (IVGG…IAIF), 421–441 (MLAV…SVVL), 459–481 (ILYA…SANT), 486–506 (ITLG…ALAI), and 529–549 (LFVG…FFPA).

It belongs to the KdpA family. As to quaternary structure, the system is composed of three essential subunits: KdpA, KdpB and KdpC.

It localises to the cell inner membrane. Part of the high-affinity ATP-driven potassium transport (or Kdp) system, which catalyzes the hydrolysis of ATP coupled with the electrogenic transport of potassium into the cytoplasm. This subunit binds the periplasmic potassium ions and delivers the ions to the membrane domain of KdpB through an intramembrane tunnel. The protein is Potassium-transporting ATPase potassium-binding subunit of Rhizobium rhizogenes (strain K84 / ATCC BAA-868) (Agrobacterium radiobacter).